The following is a 317-amino-acid chain: Small ribosomal subunit protein RACK1 (317 aa).

WD repeat units lie at residues 15 to 55 (GHNG…DNQY), 64 to 103 (GHSHIVQDVTISADGAYALSASWDRTLRLWDLETGETTQR), 106 to 146 (GHKG…ATLT), 148 to 188 (HNDW…VNAD), 191 to 230 (GHTGYISCITLSPDGSLCASAGKDGVIILWDLNKNKTLYT), 232 to 272 (EAKA…DELK), and 281 to 317 (AKDPEAISLAWSADGQNLFAGYTDNVIRVWQVMTPSA).

It belongs to the WD repeat G protein beta family. Ribosomal protein RACK1 subfamily. As to quaternary structure, component of the small ribosomal subunit. Mature ribosomes consist of a small (40S) and a large (60S) subunit. The 40S subunit contains about 32 different proteins and 1 molecule of RNA (18S). The 60S subunit contains 45 different proteins and 3 molecules of RNA (25S, 5.8S and 5S).

Its subcellular location is the cytoplasm. Functionally, component of the ribosome, a large ribonucleoprotein complex responsible for the synthesis of proteins in the cell. The small ribosomal subunit (SSU) binds messenger RNAs (mRNAs) and translates the encoded message by selecting cognate aminoacyl-transfer RNA (tRNA) molecules. The large subunit (LSU) contains the ribosomal catalytic site termed the peptidyl transferase center (PTC), which catalyzes the formation of peptide bonds, thereby polymerizing the amino acids delivered by tRNAs into a polypeptide chain. The nascent polypeptides leave the ribosome through a tunnel in the LSU and interact with protein factors that function in enzymatic processing, targeting, and the membrane insertion of nascent chains at the exit of the ribosomal tunnel. Located at the head of the 40S ribosomal subunit in the vicinity of the mRNA exit channel, it serves as a scaffold protein that can recruit other proteins to the ribosome. Involved in the negative regulation of translation of a specific subset of proteins. Plays a role in morphogenesis and pathogenesis. This Candida albicans (strain SC5314 / ATCC MYA-2876) (Yeast) protein is Small ribosomal subunit protein RACK1.